The chain runs to 386 residues: Succinate--CoA ligase [ADP-forming] subunit beta (386 aa).

The ATP-grasp domain maps to 9–244 (KEILRKYGVP…HDEEDPLETR (236 aa)). Residues Lys46, 53–55 (GRG), Glu99, Cys102, and Glu107 each bind ATP. The Mg(2+) site is built by Asn199 and Asp213. Residues Asn264 and 321-323 (GIM) each bind substrate.

The protein belongs to the succinate/malate CoA ligase beta subunit family. In terms of assembly, heterotetramer of two alpha and two beta subunits. Mg(2+) serves as cofactor.

The enzyme catalyses succinate + ATP + CoA = succinyl-CoA + ADP + phosphate. It catalyses the reaction GTP + succinate + CoA = succinyl-CoA + GDP + phosphate. The protein operates within carbohydrate metabolism; tricarboxylic acid cycle; succinate from succinyl-CoA (ligase route): step 1/1. In terms of biological role, succinyl-CoA synthetase functions in the citric acid cycle (TCA), coupling the hydrolysis of succinyl-CoA to the synthesis of either ATP or GTP and thus represents the only step of substrate-level phosphorylation in the TCA. The beta subunit provides nucleotide specificity of the enzyme and binds the substrate succinate, while the binding sites for coenzyme A and phosphate are found in the alpha subunit. The chain is Succinate--CoA ligase [ADP-forming] subunit beta from Rickettsia prowazekii (strain Madrid E).